We begin with the raw amino-acid sequence, 566 residues long: ALBINO3-like protein 3, mitochondrial (566 aa).

The N-terminal 44 residues, 1–44 (MAFRRVLLSHLRRSHHTCSSLSPHHVSATTQPSIALALFQSRFF), are a transit peptide targeting the mitochondrion. The next 4 membrane-spanning stretches (helical) occupy residues 139–159 (WVVIATSTVAFRTALLPILIL), 207–227 (LWVPAYFSIQISCFFLWITSI), 249–269 (LTEIPNGLYGPLFPFLIAGLH), and 301–321 (LLTCALYFLSFQMPQGSLLYW). 4 TPR repeats span residues 386-419 (PKELVALSAKYLSGGHKDKSIPLLRLALEKDPEY), 420-453 (LQAMIILGQALYQKDQFAEAAKCLEQAASKLLDT), 465-498 (IVASQWAGVSNIRQGKTSEGITHLERVANMKEPD), and 507-540 (LDALVLYSSAIFNEGRREEAAKYLRRVVAYDPSF). The disordered stretch occupies residues 547–566 (CEEDDTIPTSSSSNSTSKTS). Positions 555–566 (TSSSSNSTSKTS) are enriched in low complexity.

This sequence belongs to the OXA1/ALB3/YidC (TC 2.A.9.2) family.

It localises to the mitochondrion inner membrane. In terms of biological role, probably required for the insertion of integral membrane proteins into the mitochondrial inner membrane. The chain is ALBINO3-like protein 3, mitochondrial (ALB3L3) from Arabidopsis thaliana (Mouse-ear cress).